The sequence spans 744 residues: C-type polyheme cytochrome OmcB (744 aa).

An N-terminal signal peptide occupies residues M1–G23. C24 is lipidated: N-palmitoyl cysteine. The S-diacylglycerol cysteine moiety is linked to residue C24. The heme c site is built by C48, C51, H52, C81, C84, H85, C107, C110, H111, C141, C144, H145, C185, C188, H189, C225, C228, H229, C303, C306, H307, C382, C385, H386, C430, C433, H434, C480, C483, H484, C555, C558, H559, C587, C590, and H591.

Binds 12 heme c groups per subunit.

The protein resides in the cell outer membrane. Involved in anaerobic respiration with Fe(3+) as terminal electron acceptor. Acts as an electron-transport mediator in the dissimilatory reduction of Fe(3+). The chain is C-type polyheme cytochrome OmcB (omcB) from Geobacter sulfurreducens (strain DL-1 / KN400).